A 185-amino-acid chain; its full sequence is Elongation factor P (185 aa).

It belongs to the elongation factor P family.

It is found in the cytoplasm. Its pathway is protein biosynthesis; polypeptide chain elongation. Involved in peptide bond synthesis. Stimulates efficient translation and peptide-bond synthesis on native or reconstituted 70S ribosomes in vitro. Probably functions indirectly by altering the affinity of the ribosome for aminoacyl-tRNA, thus increasing their reactivity as acceptors for peptidyl transferase. The chain is Elongation factor P from Staphylococcus saprophyticus subsp. saprophyticus (strain ATCC 15305 / DSM 20229 / NCIMB 8711 / NCTC 7292 / S-41).